A 332-amino-acid chain; its full sequence is L-lactate dehydrogenase A chain (332 aa).

Residues 29 to 57 (GAVGMACAISILMKDLADELALVDVVEDK) and arginine 99 each bind NAD(+). Residues arginine 106, asparagine 138, and arginine 169 each contribute to the substrate site. An NAD(+)-binding site is contributed by asparagine 138. Residue histidine 193 is the Proton acceptor of the active site. A substrate-binding site is contributed by threonine 248.

Belongs to the LDH/MDH superfamily. LDH family. In terms of assembly, homotetramer.

Its subcellular location is the cytoplasm. The enzyme catalyses (S)-lactate + NAD(+) = pyruvate + NADH + H(+). The protein operates within fermentation; pyruvate fermentation to lactate; (S)-lactate from pyruvate: step 1/1. Interconverts simultaneously and stereospecifically pyruvate and lactate with concomitant interconversion of NADH and NAD(+). This Caiman crocodilus apaporiensis (Rio Apaporis caiman) protein is L-lactate dehydrogenase A chain (LDHA).